The sequence spans 417 residues: MALNMRVSSSKVAAKQQGRISAVPVVSSKVASSARVAPFQGAPVAAQRAALLVRAAAATEVKAAEGRTGKELGQARPIFPFTAIVGQDEMKLALILNVIDPKIGGVMIMGDRGTGKSTTIRALADLLPEMQVVANDPFNSDPTDPELMSEEVRNRVKAGEQLPVSSKKIPMVDLPLGATEDRVCGTIDIEKALTEGVKAFEPGLLAKANRGILYVDEVNLLDDHLVDVLLDSAASGWNTVEREGISISHPARFILVGSGNPEEGELRPQLLDRFGMHAQIGTVKDPRLRVQIVSQRSTFDENPAAFRKDYEAGQMALTQRIVDARKLLKQGEVNYDFRVKISQICSDLNVDGIRGDIVTNRAAKALAAFEGRTEVTPEDIYRVIPLCLRHRLRKDPLAEIDDGDRVREIFKQVFGME.

The transit peptide at 1 to 54 directs the protein to the chloroplast; it reads MALNMRVSSSKVAAKQQGRISAVPVVSSKVASSARVAPFQGAPVAAQRAALLVR. 110 to 117 is a binding site for ATP; that stretch reads GDRGTGKS. Cysteines 345 and 387 form a disulfide.

The protein belongs to the Mg-chelatase subunits D/I family. In terms of assembly, the magnesium chelatase complex is a heterotrimer consisting of subunits CHLI, CHLD and CHLH.

It localises to the plastid. The protein resides in the chloroplast. The catalysed reaction is protoporphyrin IX + Mg(2+) + ATP + H2O = Mg-protoporphyrin IX + ADP + phosphate + 3 H(+). It participates in porphyrin-containing compound metabolism; chlorophyll biosynthesis. With respect to regulation, redox regulation; active in reducing conditions, inactive in oxidizing conditions. Thioredoxins f and m mediate the reversible reductive activation of oxidized CHLI. In terms of biological role, involved in chlorophyll biosynthesis. Catalyzes the insertion of magnesium ion into protoporphyrin IX to yield Mg-protoporphyrin IX. The magnesium-chelatase is a complex of three subunits, CHLI, CHLD and CHLH. The reaction takes place in two steps, with an ATP-dependent activation followed by an ATP-dependent chelation step. The chain is Magnesium-chelatase subunit ChlI, chloroplastic (CHLI) from Chlamydomonas reinhardtii (Chlamydomonas smithii).